The sequence spans 629 residues: tRNA uridine 5-carboxymethylaminomethyl modification enzyme MnmG (629 aa).

Residue 13–18 (GGGHAG) participates in FAD binding. 273–287 (GPRYCPSIEDKIHRF) provides a ligand contact to NAD(+).

The protein belongs to the MnmG family. In terms of assembly, homodimer. Heterotetramer of two MnmE and two MnmG subunits. Requires FAD as cofactor.

It localises to the cytoplasm. Its function is as follows. NAD-binding protein involved in the addition of a carboxymethylaminomethyl (cmnm) group at the wobble position (U34) of certain tRNAs, forming tRNA-cmnm(5)s(2)U34. This chain is tRNA uridine 5-carboxymethylaminomethyl modification enzyme MnmG, found in Shewanella denitrificans (strain OS217 / ATCC BAA-1090 / DSM 15013).